Here is a 937-residue protein sequence, read N- to C-terminus: Translation initiation factor IF-2 (937 aa).

Disordered stretches follow at residues 61-156 (IQAN…KAKQ) and 171-274 (LTQS…SHKI). Positions 179–196 (AKKEISEVKKQEQEIKRH) are enriched in basic and acidic residues. The segment covering 197–208 (ENIKRRTGFRVI) has biased composition (basic residues). Residues 237 to 252 (EDIKKEWQEKDKQEAK) show a composition bias toward basic and acidic residues. Residues 436-605 (ERPPVVTIMG…LIQADIMELK (170 aa)) enclose the tr-type G domain. Positions 445–452 (GHVDHGKT) are G1. GTP is bound at residue 445-452 (GHVDHGKT). The tract at residues 470-474 (GITQH) is G2. The tract at residues 491 to 494 (DTPG) is G3. Residues 491-495 (DTPGH) and 545-548 (NKMD) contribute to the GTP site. Positions 545–548 (NKMD) are G4. Residues 581-583 (SAK) are G5.

The protein belongs to the TRAFAC class translation factor GTPase superfamily. Classic translation factor GTPase family. IF-2 subfamily.

Its subcellular location is the cytoplasm. One of the essential components for the initiation of protein synthesis. Protects formylmethionyl-tRNA from spontaneous hydrolysis and promotes its binding to the 30S ribosomal subunits. Also involved in the hydrolysis of GTP during the formation of the 70S ribosomal complex. This chain is Translation initiation factor IF-2, found in Helicobacter pylori (strain G27).